The following is a 228-amino-acid chain: 2,3-bisphosphoglycerate-dependent phosphoglycerate mutase (228 aa).

Residues 8–15, 21–22, Arg-60, 87–90, Lys-98, 114–115, and 180–181 each bind substrate; these read RHGQSQWN, TG, ERHY, RR, and GN. His-9 (tele-phosphohistidine intermediate) is an active-site residue. Glu-87 acts as the Proton donor/acceptor in catalysis.

Belongs to the phosphoglycerate mutase family. BPG-dependent PGAM subfamily. In terms of assembly, homodimer.

The catalysed reaction is (2R)-2-phosphoglycerate = (2R)-3-phosphoglycerate. It participates in carbohydrate degradation; glycolysis; pyruvate from D-glyceraldehyde 3-phosphate: step 3/5. Functionally, catalyzes the interconversion of 2-phosphoglycerate and 3-phosphoglycerate. This is 2,3-bisphosphoglycerate-dependent phosphoglycerate mutase from Erythrobacter litoralis (strain HTCC2594).